A 537-amino-acid chain; its full sequence is GTPase LSG1-1 (537 aa).

The CP-type G domain occupies 158 to 362; sequence WRQLWRVLER…LCDCPGLVFP (205 aa). Residues 176 to 180 carry the DARXP motif motif; that stretch reads DARDP. The segment at 206–209 is G4; the sequence is NKAD. A GTP-binding site is contributed by 206-209; it reads NKAD. Positions 234–236 are G5; sequence SAK. The segment at 311-318 is G1; that stretch reads GYPNVGKS. GTP is bound at residue 314–319; the sequence is NVGKSS. The interval 337–341 is G2; it reads GKTKH. A G3 region spans residues 355 to 358; the sequence is DCPG. Gly-358 provides a ligand contact to GTP. A disordered region spans residues 484–508; it reads LGAETREGSQTEKKGEEAPSLGLDQ. Basic and acidic residues predominate over residues 487–500; that stretch reads ETREGSQTEKKGEE.

It belongs to the TRAFAC class YlqF/YawG GTPase family. Ubiquitous, with the highest expression in stem and hypsophyll on day 66.

It localises to the cytoplasm. Its function is as follows. GTPase that might be redundant with LSG1-2 for ribosome biogenesis. Binds to 23S rRNA. This Arabidopsis thaliana (Mouse-ear cress) protein is GTPase LSG1-1.